Consider the following 157-residue polypeptide: Snaclec A16 (157 aa).

The first 23 residues, 1 to 23 (MGRLISVSFGLLVVFLSLSGTGA), serve as a signal peptide directing secretion. Cystine bridges form between C27/C38, C55/C149, and C124/C141. Positions 34–150 (YEGHCYKVFN…CELAYHFICM (117 aa)) constitute a C-type lectin domain.

Belongs to the snaclec family. In terms of assembly, heterodimer; disulfide-linked. As to expression, expressed by the venom gland.

The protein resides in the secreted. In terms of biological role, interferes with one step of hemostasis (modulation of platelet aggregation, or coagulation cascade, for example). This chain is Snaclec A16, found in Macrovipera lebetinus (Levantine viper).